We begin with the raw amino-acid sequence, 269 residues long: 3-methyl-2-oxobutanoate hydroxymethyltransferase (269 aa).

Residues Asp-48 and Asp-87 each contribute to the Mg(2+) site. 3-methyl-2-oxobutanoate contacts are provided by residues 48–49, Asp-87, and Lys-117; that span reads DS. Glu-119 provides a ligand contact to Mg(2+). The Proton acceptor role is filled by Glu-186.

This sequence belongs to the PanB family. In terms of assembly, homodecamer; pentamer of dimers. The cofactor is Mg(2+).

Its subcellular location is the cytoplasm. It carries out the reaction 3-methyl-2-oxobutanoate + (6R)-5,10-methylene-5,6,7,8-tetrahydrofolate + H2O = 2-dehydropantoate + (6S)-5,6,7,8-tetrahydrofolate. The protein operates within cofactor biosynthesis; (R)-pantothenate biosynthesis; (R)-pantoate from 3-methyl-2-oxobutanoate: step 1/2. Catalyzes the reversible reaction in which hydroxymethyl group from 5,10-methylenetetrahydrofolate is transferred onto alpha-ketoisovalerate to form ketopantoate. The sequence is that of 3-methyl-2-oxobutanoate hydroxymethyltransferase from Moorella thermoacetica (strain ATCC 39073 / JCM 9320).